A 218-amino-acid chain; its full sequence is Ropporin-1-like protein (218 aa).

The RIIa domain maps to proline 17–aspartate 54. The disordered stretch occupies residues glutamine 199–lysine 218.

Belongs to the ropporin family. As to quaternary structure, component of axonemal radial spoke complexes.

Its subcellular location is the cell projection. It is found in the cilium. The protein resides in the flagellum. Functionally, functions as part of axonemal radial spoke complexes that play an important part in the motility of sperm and cilia. Important for male fertility. Involved in fibrous sheath integrity and sperm motility, plays a role in PKA-dependent signaling processes required for spermatozoa capacitation. The polypeptide is Ropporin-1-like protein (ropn1l) (Danio rerio (Zebrafish)).